Here is a 249-residue protein sequence, read N- to C-terminus: Tetraspanin-18 (249 aa).

The Cytoplasmic segment spans residues 1-13; sequence MEGDCLSCMKYLM. The helical transmembrane segment at 14–34 threads the bilayer; it reads FVFNFFIFLGGACLLGIGIWV. The Extracellular segment spans residues 35-49; that stretch reads MVDPTGFREIVAANP. A helical transmembrane segment spans residues 50–70; that stretch reads LLITGAYILLAMGGLLFLLGF. The Cytoplasmic segment spans residues 71–83; the sequence is LGCCGAVRENKCL. Residues 84–104 traverse the membrane as a helical segment; that stretch reads LLFFFLFILIIFLAELSAAIL. Over 105–223 the chain is Extracellular; that stretch reads AFIFRGNLTR…AFETYVYLAG (119 aa). 2 N-linked (GlcNAc...) asparagine glycosylation sites follow: N111 and N129. The chain crosses the membrane as a helical span at residues 224–244; the sequence is ALAIGVLAIELFAMIFAMCLF. Residues 245–249 lie on the Cytoplasmic side of the membrane; the sequence is RGIIQ.

This sequence belongs to the tetraspanin (TM4SF) family. As to quaternary structure, interacts with ORAI1; this interaction regulates ORAI1 exit from the endoplasmic (ER), and/or Golgi, and trafficking to the cell surface.

It localises to the membrane. In terms of biological role, plays a role in the cell surface localization of ORAI1 and may participate in the regulation of Ca(2+) signaling and the VWF release in response to inflammatory stimuli. The sequence is that of Tetraspanin-18 from Bos taurus (Bovine).